The following is a 213-amino-acid chain: NADH-quinone oxidoreductase subunit I (213 aa).

4Fe-4S ferredoxin-type domains lie at 74–103 and 113–142; these read RFIE…METS and ENYS…HGTE. Residues cysteine 83, cysteine 86, cysteine 89, cysteine 93, cysteine 122, cysteine 125, cysteine 128, and cysteine 132 each contribute to the [4Fe-4S] cluster site.

Belongs to the complex I 23 kDa subunit family. As to quaternary structure, NDH-1 is composed of 14 different subunits. Subunits NuoA, H, J, K, L, M, N constitute the membrane sector of the complex. [4Fe-4S] cluster serves as cofactor.

It is found in the cell inner membrane. It carries out the reaction a quinone + NADH + 5 H(+)(in) = a quinol + NAD(+) + 4 H(+)(out). Its function is as follows. NDH-1 shuttles electrons from NADH, via FMN and iron-sulfur (Fe-S) centers, to quinones in the respiratory chain. The immediate electron acceptor for the enzyme in this species is believed to be ubiquinone. Couples the redox reaction to proton translocation (for every two electrons transferred, four hydrogen ions are translocated across the cytoplasmic membrane), and thus conserves the redox energy in a proton gradient. The chain is NADH-quinone oxidoreductase subunit I from Campylobacter jejuni subsp. jejuni serotype O:23/36 (strain 81-176).